Here is a 385-residue protein sequence, read N- to C-terminus: Tuliposide A-converting enzyme 1, chloroplastic (385 aa).

Residues 1-77 (MSVASFFSSL…PSPSLSPTPT (77 aa)) constitute a chloroplast transit peptide. S235 serves as the catalytic Acyl-ester intermediate. Catalysis depends on charge relay system residues D327 and H359.

Belongs to the AB hydrolase superfamily. In terms of assembly, homodimer. In terms of tissue distribution, expressed in roots, stems, leaves, petals, stamens and pistils, but not in bulb scales.

It localises to the plastid. It is found in the chloroplast. It catalyses the reaction 6-tuliposide A = tulipalin A + D-glucose. With respect to regulation, inhibited by NaF, AgNO(3), HgCl(2), CuSO(4) and phenylmethylsulfonyl fluoride (PMSF). Functionally, lactone-forming carboxylesterases, specifically catalyzing intramolecular transesterification, but not hydrolysis. Involved in the biosynthesis of tulipalins, defensive chemicals that show antimicrobial activities against a broad range of strains of bacteria and fungi. Substrates are 6-tuliposide A &gt; 6-tuliposide B. This is Tuliposide A-converting enzyme 1, chloroplastic (TCEA1) from Tulipa gesneriana (Garden tulip).